A 440-amino-acid chain; its full sequence is Asparagine--tRNA ligase (440 aa).

This sequence belongs to the class-II aminoacyl-tRNA synthetase family. As to quaternary structure, homodimer.

It localises to the cytoplasm. It carries out the reaction tRNA(Asn) + L-asparagine + ATP = L-asparaginyl-tRNA(Asn) + AMP + diphosphate + H(+). In Chloroflexus aurantiacus (strain ATCC 29364 / DSM 637 / Y-400-fl), this protein is Asparagine--tRNA ligase.